The sequence spans 192 residues: Rho-related protein racC (192 aa).

GTP is bound at residue 13–20 (GDGAVGKT). An Effector region motif is present at residues 35–43 (YIPTVFDNY). GTP contacts are provided by residues 60–64 (DTAGQ) and 118–121 (TKLD). C189 carries the post-translational modification Cysteine methyl ester. Residue C189 is the site of S-geranylgeranyl cysteine attachment. Residues 190 to 192 (IVM) constitute a propeptide, removed in mature form.

The protein belongs to the small GTPase superfamily. Rho family. As to quaternary structure, interacts with pakB.

Its subcellular location is the cell membrane. This Dictyostelium discoideum (Social amoeba) protein is Rho-related protein racC (racC).